The primary structure comprises 107 residues: MREMMSMMKKAKEMQERMQKIQEEMANLQATGTAGGDLVSITLNGKNIITAIQIDPSLLKPEEAEILEDLIMAAYNEARAKIDNALEEKTKSMTAGLPLPSGFKLPF.

It belongs to the YbaB/EbfC family. As to quaternary structure, homodimer.

The protein localises to the cytoplasm. It localises to the nucleoid. In terms of biological role, binds to DNA and alters its conformation. May be involved in regulation of gene expression, nucleoid organization and DNA protection. In Bartonella tribocorum (strain CIP 105476 / IBS 506), this protein is Nucleoid-associated protein BT_0257.